Consider the following 215-residue polypeptide: Orotate phosphoribosyltransferase (215 aa).

Lys-26 provides a ligand contact to 5-phospho-alpha-D-ribose 1-diphosphate. Phe-34–Phe-35 is an orotate binding site. Residues Tyr-72–Lys-73, Arg-99, Lys-100, Lys-103, His-105, and Asp-124–Ala-132 each bind 5-phospho-alpha-D-ribose 1-diphosphate. Orotate contacts are provided by Thr-128 and Arg-156.

The protein belongs to the purine/pyrimidine phosphoribosyltransferase family. PyrE subfamily. In terms of assembly, homodimer. Requires Mg(2+) as cofactor.

It carries out the reaction orotidine 5'-phosphate + diphosphate = orotate + 5-phospho-alpha-D-ribose 1-diphosphate. It functions in the pathway pyrimidine metabolism; UMP biosynthesis via de novo pathway; UMP from orotate: step 1/2. Catalyzes the transfer of a ribosyl phosphate group from 5-phosphoribose 1-diphosphate to orotate, leading to the formation of orotidine monophosphate (OMP). This chain is Orotate phosphoribosyltransferase, found in Yersinia pseudotuberculosis serotype O:1b (strain IP 31758).